The chain runs to 100 residues: NADH-quinone oxidoreductase subunit K (100 aa).

3 consecutive transmembrane segments (helical) span residues 4 to 24 (LTHG…GLVI), 28 to 48 (LLFM…AFVV), and 60 to 80 (VMYI…LALL).

It belongs to the complex I subunit 4L family. As to quaternary structure, NDH-1 is composed of 13 different subunits. Subunits NuoA, H, J, K, L, M, N constitute the membrane sector of the complex.

The protein localises to the cell inner membrane. The enzyme catalyses a quinone + NADH + 5 H(+)(in) = a quinol + NAD(+) + 4 H(+)(out). NDH-1 shuttles electrons from NADH, via FMN and iron-sulfur (Fe-S) centers, to quinones in the respiratory chain. The immediate electron acceptor for the enzyme in this species is believed to be ubiquinone. Couples the redox reaction to proton translocation (for every two electrons transferred, four hydrogen ions are translocated across the cytoplasmic membrane), and thus conserves the redox energy in a proton gradient. This Salmonella agona (strain SL483) protein is NADH-quinone oxidoreductase subunit K.